A 317-amino-acid chain; its full sequence is Apolipoprotein E (317 aa).

The signal sequence occupies residues 1 to 18; sequence MKVLWAALLVTFLAGCQA. 8 repeat units span residues 80 to 101, 102 to 123, 124 to 145, 146 to 167, 168 to 189, 190 to 211, 212 to 233, and 234 to 255. The segment at 80-255 is 8 X 22 AA approximate tandem repeats; the sequence is ALMDETMKEL…RLDEVKEQVA (176 aa). M143 is subject to Methionine sulfoxide. Residue S147 is modified to Phosphoserine. An LDL and other lipoprotein receptors binding region spans residues 158-168; sequence HLRKLRKRLLR. Heparin is bound at residue 162 to 165; that stretch reads LRKR. The interval 210-290 is lipid-binding and lipoprotein association; that stretch reads AATVGSLAGQ…SWFEPLVEDM (81 aa). 229 to 236 contributes to the heparin binding site; it reads GERLRARM. The segment at 266-317 is homooligomerization; the sequence is QQIRLQAEAFQARLKSWFEPLVEDMQRQWAGLVEKVQAAMGTSAAPVPSDNH. Residues 278–290 form a specificity for association with VLDL region; sequence RLKSWFEPLVEDM.

This sequence belongs to the apolipoprotein A1/A4/E family. As to quaternary structure, homotetramer. May interact with ABCA1; functionally associated with ABCA1 in the biogenesis of HDLs. May interact with APP/A4 amyloid-beta peptide; the interaction is extremely stable in vitro but its physiological significance is unclear. May interact with MAPT. May interact with MAP2. In the cerebrospinal fluid, interacts with secreted SORL1. Interacts with PMEL; this allows the loading of PMEL luminal fragment on ILVs to induce fibril nucleation. APOE exists as multiple glycosylated and sialylated glycoforms within cells and in plasma. The extent of glycosylation and sialylation are tissue and context specific. Post-translationally, glycated in plasma VLDL. In terms of processing, phosphorylated by FAM20C in the extracellular medium.

It localises to the secreted. It is found in the extracellular space. The protein localises to the extracellular matrix. Its subcellular location is the extracellular vesicle. The protein resides in the endosome. It localises to the multivesicular body. APOE is an apolipoprotein, a protein associating with lipid particles, that mainly functions in lipoprotein-mediated lipid transport between organs via the plasma and interstitial fluids. APOE is a core component of plasma lipoproteins and is involved in their production, conversion and clearance. Apolipoproteins are amphipathic molecules that interact both with lipids of the lipoprotein particle core and the aqueous environment of the plasma. As such, APOE associates with chylomicrons, chylomicron remnants, very low density lipoproteins (VLDL) and intermediate density lipoproteins (IDL) but shows a preferential binding to high-density lipoproteins (HDL). It also binds a wide range of cellular receptors including the LDL receptor/LDLR, the LDL receptor-related proteins LRP1, LRP2 and LRP8 and the very low-density lipoprotein receptor/VLDLR that mediate the cellular uptake of the APOE-containing lipoprotein particles. Finally, APOE also has a heparin-binding activity and binds heparan-sulfate proteoglycans on the surface of cells, a property that supports the capture and the receptor-mediated uptake of APOE-containing lipoproteins by cells. A main function of APOE is to mediate lipoprotein clearance through the uptake of chylomicrons, VLDLs, and HDLs by hepatocytes. APOE is also involved in the biosynthesis by the liver of VLDLs as well as their uptake by peripheral tissues ensuring the delivery of triglycerides and energy storage in muscle, heart and adipose tissues. By participating in the lipoprotein-mediated distribution of lipids among tissues, APOE plays a critical role in plasma and tissues lipid homeostasis. APOE is also involved in two steps of reverse cholesterol transport, the HDLs-mediated transport of cholesterol from peripheral tissues to the liver, and thereby plays an important role in cholesterol homeostasis. First, it is functionally associated with ABCA1 in the biogenesis of HDLs in tissues. Second, it is enriched in circulating HDLs and mediates their uptake by hepatocytes. APOE also plays an important role in lipid transport in the central nervous system, regulating neuron survival and sprouting. This chain is Apolipoprotein E (APOE), found in Pan troglodytes (Chimpanzee).